The primary structure comprises 115 residues: NADH-ubiquinone oxidoreductase chain 3 (115 aa).

3 helical membrane passes run 3–23, 55–75, and 86–106; these read LVMALLTNTALASLLVLIAFW, FFLVAITFLLFDLEVALLLPL, and TMLIMALTLISLLAISLAYEW.

This sequence belongs to the complex I subunit 3 family. In terms of assembly, core subunit of respiratory chain NADH dehydrogenase (Complex I) which is composed of 45 different subunits. Interacts with TMEM186. Interacts with TMEM242.

It localises to the mitochondrion inner membrane. It catalyses the reaction a ubiquinone + NADH + 5 H(+)(in) = a ubiquinol + NAD(+) + 4 H(+)(out). Its function is as follows. Core subunit of the mitochondrial membrane respiratory chain NADH dehydrogenase (Complex I) which catalyzes electron transfer from NADH through the respiratory chain, using ubiquinone as an electron acceptor. Essential for the catalytic activity of complex I. The chain is NADH-ubiquinone oxidoreductase chain 3 from Hippopotamus amphibius (Hippopotamus).